The primary structure comprises 424 residues: Tubby protein homolog 1 (424 aa).

Positions 19 to 47 (MLEDKQKQKRHQSAGSVRTTTTTSSMSMN) are disordered. The segment covering 37-47 (TTTTTSSMSMN) has biased composition (low complexity).

The protein belongs to the TUB family. As to quaternary structure, interacts with rgb-3.

The protein localises to the cytoplasm. Its subcellular location is the cell projection. It localises to the axon. The protein resides in the dendrite. It is found in the cilium. Has a role in fat regulation independent of daf-16. Implicated in ciliar sensory function which is required for normal sensory behavior such as chemotaxis. Functions in life span control via the insulin/IGF-1 pathway. Thought to be involved in neuronal trafficking. This chain is Tubby protein homolog 1, found in Caenorhabditis briggsae.